The chain runs to 163 residues: Nucleotide-binding protein GWCH70_0711 (163 aa).

Belongs to the YajQ family.

Functionally, nucleotide-binding protein. The chain is Nucleotide-binding protein GWCH70_0711 from Geobacillus sp. (strain WCH70).